The following is a 103-amino-acid chain: ATP synthase F(0) complex subunit g, mitochondrial (103 aa).

A2 is subject to N-acetylalanine. N6-acetyllysine is present on residues K11, K24, K35, and K54.

The protein belongs to the ATPase g subunit family. In terms of assembly, component of the ATP synthase complex composed at least of ATP5F1A/subunit alpha, ATP5F1B/subunit beta, ATP5MC1/subunit c (homooctomer), MT-ATP6/subunit a, MT-ATP8/subunit 8, ATP5ME/subunit e, ATP5MF/subunit f, ATP5MG/subunit g, ATP5MK/subunit k, ATP5MJ/subunit j, ATP5F1C/subunit gamma, ATP5F1D/subunit delta, ATP5F1E/subunit epsilon, ATP5PF/subunit F6, ATP5PB/subunit b, ATP5PD/subunit d, ATP5PO/subunit OSCP. ATP synthase complex consists of a soluble F(1) head domain (subunits alpha(3) and beta(3)) - the catalytic core - and a membrane F(0) domain - the membrane proton channel (subunits c, a, 8, e, f, g, k and j). These two domains are linked by a central stalk (subunits gamma, delta, and epsilon) rotating inside the F1 region and a stationary peripheral stalk (subunits F6, b, d, and OSCP).

Its subcellular location is the mitochondrion. It localises to the mitochondrion inner membrane. In terms of biological role, subunit g, of the mitochondrial membrane ATP synthase complex (F(1)F(0) ATP synthase or Complex V) that produces ATP from ADP in the presence of a proton gradient across the membrane which is generated by electron transport complexes of the respiratory chain. ATP synthase complex consist of a soluble F(1) head domain - the catalytic core - and a membrane F(1) domain - the membrane proton channel. These two domains are linked by a central stalk rotating inside the F(1) region and a stationary peripheral stalk. During catalysis, ATP synthesis in the catalytic domain of F(1) is coupled via a rotary mechanism of the central stalk subunits to proton translocation. In vivo, can only synthesize ATP although its ATP hydrolase activity can be activated artificially in vitro. Part of the complex F(0) domain. This is ATP synthase F(0) complex subunit g, mitochondrial from Homo sapiens (Human).